Consider the following 814-residue polypeptide: Acyl-coenzyme A dehydrogenase (814 aa).

Catalysis depends on glutamate 497, which acts as the Proton acceptor.

The protein belongs to the acyl-CoA dehydrogenase family. FAD is required as a cofactor.

It carries out the reaction a medium-chain 2,3-saturated fatty acyl-CoA + oxidized [electron-transfer flavoprotein] + H(+) = a medium-chain (2E)-enoyl-CoA + reduced [electron-transfer flavoprotein]. The catalysed reaction is a long-chain 2,3-saturated fatty acyl-CoA + oxidized [electron-transfer flavoprotein] + H(+) = a long-chain (2E)-enoyl-CoA + reduced [electron-transfer flavoprotein]. It functions in the pathway lipid metabolism; fatty acid beta-oxidation. Catalyzes the dehydrogenation of acyl-coenzymes A (acyl-CoAs) to 2-enoyl-CoAs, the first step of the beta-oxidation cycle of fatty acid degradation. Is required for the utilization of medium- and long-chain fatty acids as sole carbon sources for growth. This is Acyl-coenzyme A dehydrogenase (fadE) from Escherichia coli O157:H7.